The chain runs to 256 residues: Protein FixA (256 aa).

It belongs to the ETF beta-subunit/FixA family. As to quaternary structure, heterodimer of FixA and FixB.

It functions in the pathway amine and polyamine metabolism; carnitine metabolism. Its function is as follows. Required for anaerobic carnitine reduction. May bring reductant to CaiA. The polypeptide is Protein FixA (Escherichia coli O17:K52:H18 (strain UMN026 / ExPEC)).